The following is a 196-amino-acid chain: Small ribosomal subunit protein uS4C (196 aa).

In terms of domain architecture, S4 RNA-binding spans 87 to 149; that stretch reads CRLDNVVYRI…HRQNEMFSNN (63 aa).

The protein belongs to the universal ribosomal protein uS4 family. As to quaternary structure, part of the 30S ribosomal subunit. Contacts protein S5. The interaction surface between S4 and S5 is involved in control of translational fidelity.

One of the primary rRNA binding proteins, it binds directly to 16S rRNA where it nucleates assembly of the body of the 30S subunit. Its function is as follows. With S5 and S12 plays an important role in translational accuracy. The sequence is that of Small ribosomal subunit protein uS4C (rpsD3) from Clostridium acetobutylicum (strain ATCC 824 / DSM 792 / JCM 1419 / IAM 19013 / LMG 5710 / NBRC 13948 / NRRL B-527 / VKM B-1787 / 2291 / W).